Consider the following 121-residue polypeptide: Ribosome-binding factor A (121 aa).

This sequence belongs to the RbfA family. As to quaternary structure, monomer. Binds 30S ribosomal subunits, but not 50S ribosomal subunits or 70S ribosomes.

It is found in the cytoplasm. Its function is as follows. One of several proteins that assist in the late maturation steps of the functional core of the 30S ribosomal subunit. Associates with free 30S ribosomal subunits (but not with 30S subunits that are part of 70S ribosomes or polysomes). Required for efficient processing of 16S rRNA. May interact with the 5'-terminal helix region of 16S rRNA. In Lactobacillus acidophilus (strain ATCC 700396 / NCK56 / N2 / NCFM), this protein is Ribosome-binding factor A.